A 119-amino-acid polypeptide reads, in one-letter code: Nascent polypeptide-associated complex protein (119 aa).

An NAC-A/B domain is found at 5–73; sequence RMNSREMRRL…MREVPKEPEE (69 aa).

It belongs to the NAC-alpha family. As to quaternary structure, homodimer. Interacts with the ribosome. Binds ribosomal RNA.

Its function is as follows. Contacts the emerging nascent chain on the ribosome. This is Nascent polypeptide-associated complex protein from Thermoplasma acidophilum (strain ATCC 25905 / DSM 1728 / JCM 9062 / NBRC 15155 / AMRC-C165).